The following is a 1902-amino-acid chain: Rho GTPase-activating protein 21-B (1902 aa).

8 disordered regions span residues 1 to 44, 78 to 97, 284 to 317, 348 to 369, 409 to 450, 581 to 603, 613 to 632, and 879 to 902; these read MATR…EGFC, TSVKDEENGNRGVNAGRPRN, RTNRAGPLHRTGLADPSILKRTTSPSSSTPNVPM, PAAHAEESPSPTNHYASPGSHQ, NTTD…SQER, TRNFQNSSRAPHPRPALSDRSGF, IPTPYAAKPHSPSVRSDDGI, and KARENVQSSEDSESRKDSSSDVFS. A compositionally biased stretch (polar residues) spans 10–22; it reads EQQQEPSSPASEI. Positions 77-162 constitute a PDZ domain; that stretch reads HTSVKDEENG…TLELSVMPKD (86 aa). The span at 305–317 shows a compositional bias: low complexity; that stretch reads TTSPSSSTPNVPM. Residues 409 to 424 show a composition bias toward polar residues; sequence NTTDYNQMLPNRSSGQ. In terms of domain architecture, PH spans 903 to 1016; the sequence is DSNKEGFLYF…WIKAIQENGN (114 aa). The span at 1039–1063 shows a compositional bias: polar residues; that stretch reads TMMSSSSNKTEPSPKAQRQTLSIRQ. Residues 1039 to 1095 form a disordered region; it reads TMMSSSSNKTEPSPKAQRQTLSIRQQFRAGKPDDDISPPKDKGSWRRIMKKPFEKKP. Over residues 1068 to 1082 the composition is skewed to basic and acidic residues; that stretch reads GKPDDDISPPKDKGS. Residues 1103 to 1295 enclose the Rho-GAP domain; sequence VRLDDCPPAH…TLIQKHDWFF (193 aa). 6 disordered regions span residues 1306 to 1357, 1375 to 1394, 1494 to 1520, 1559 to 1704, 1729 to 1748, and 1803 to 1890; these read TVHE…GSGK, RKRKKQKDKPQPSSSEDELD, MSDSGTMLSTSSQASVQGSKPKVVSPE, VQSV…EPAW, QKANAAETRKKKNIRRRHTL, and TSTS…KLSG. The span at 1339–1357 shows a compositional bias: low complexity; that stretch reads SDSATSDSAKSKGSWGSGK. Polar residues predominate over residues 1494–1511; the sequence is MSDSGTMLSTSSQASVQG. 2 stretches are compositionally biased toward basic and acidic residues: residues 1575-1585 and 1601-1613; these read SELVSEGRPME and FDRRHQSKAEEPS. Over residues 1614 to 1630 the composition is skewed to polar residues; sequence RNVQVNSEGSPSCTEGS. 2 stretches are compositionally biased toward basic and acidic residues: residues 1634–1652 and 1661–1673; these read KMDRRRFSSHKLIECDTLS and TDSDCSAESKTEE. The span at 1737 to 1748 shows a compositional bias: basic residues; sequence RKKKNIRRRHTL. A compositionally biased stretch (polar residues) spans 1865–1878; the sequence is NGDSFQSKNKNNFS.

The protein localises to the golgi apparatus membrane. Its subcellular location is the cell junction. It localises to the cytoplasmic vesicle membrane. It is found in the cytoplasm. The protein resides in the cytoskeleton. In terms of biological role, GTPase-activating protein (GAP) for rhoa and cdc42. This is Rho GTPase-activating protein 21-B (arhgap21-b) from Xenopus laevis (African clawed frog).